We begin with the raw amino-acid sequence, 693 residues long: Sodium-dependent dopamine transporter (693 aa).

Residues 1–56 (MSEGRCSVAHMSSVVAPAKEANAMGPKAVELVLVKEQNGVQLTNSTLLNPPQSPTE) lie on the Cytoplasmic side of the membrane. The discontinuously helical transmembrane segment at 57–95 (AQDRETWSKKADFLLSVIGFAVDLANVWRFPYLCYKNGG) threads the bilayer. Na(+) is bound by residues Gly-75, Ala-77, Val-78, Asp-79, and Asn-82. Residue Asp-79 coordinates dopamine. The next 2 membrane-spanning stretches (helical) occupy residues 96–127 (GAFL…NREG) and 128–171 (AAGV…LSSF). Dopamine-binding residues include Ser-149 and Gly-153. Residues 172 to 233 (TTELPWTHCN…SQGIDDLGPP (62 aa)) are Extracellular-facing. A disulfide bridge connects residues Cys-180 and Cys-189. Asn-181, Asn-196, and Asn-202 each carry an N-linked (GlcNAc...) asparagine glycan. Transmembrane regions (helical) follow at residues 234–253 (RWQL…FSLW) and 254–284 (KGVK…GITL). Topologically, residues 285–303 (PGAVDAIRAYLSVDFHRLC) are extracellular. A discontinuously helical transmembrane segment spans residues 304-332 (EASVWIDAAIQICFSLGVGLGVLIAFSSY). Gln-314 is a binding site for chloride. Residue Phe-317 coordinates dopamine. Na(+) is bound by residues Ser-318 and Asn-350. A chloride-binding site is contributed by Ser-318. The chain crosses the membrane as a helical span at residues 333-373 (NKFTNNCYRDAIITTSVNSLTSFSSGFVVFSFLGYMAQKHS). Ser-354 is a binding site for chloride. Residues 374–397 (VPIGDVAKDGPGLIFIIYPEALAT) lie on the Extracellular side of the membrane. The next 3 helical transmembrane spans lie at 398 to 439 (LPLS…QLLH), 440 to 463 (RHRE…CVTN), and 464 to 496 (GGIY…AWFY). 3 residues coordinate Na(+): Leu-415, Asp-418, and Ser-419. Positions 419 and 420 each coordinate dopamine. Residues 497–513 (GVWQFSDDIKQMTGRRP) are Cytoplasmic-facing. The chain crosses the membrane as a helical span at residues 514 to 539 (SLYWRLCWKFVSPCFLLFVVVVSIAT). Topologically, residues 540 to 550 (FRPPHYGAYVF) are extracellular. A helical transmembrane segment spans residues 551–580 (PEWATALGWAIAASSMSVVPIYAAYKLCSL). The interval 558-587 (GWAIAASSMSVVPIYAAYKLCSLPGSSREK) is interaction with TGFB1I1. The Cytoplasmic portion of the chain corresponds to 581 to 693 (PGSSREKLAY…VESTGLCSVY (113 aa)).

It belongs to the sodium:neurotransmitter symporter (SNF) (TC 2.A.22) family. SLC6A3 subfamily. In terms of assembly, monomer. Homooligomer; disulfide-linked. Interacts with PRKCABP and TGFB1I1. Interacts (via N-terminus) with SYNGR3 (via N-terminus). Interacts with SLC18A2. Interacts with TOR1A (ATP-bound); TOR1A regulates SLC6A3 subcellular location. Interacts with alpha-synuclein/SNCA. Interacts with SEPTIN4. Expressed in the neurons of the substantia nigra of the brain.

The protein resides in the cell membrane. It is found in the cell projection. Its subcellular location is the neuron projection. It localises to the axon. It carries out the reaction dopamine(out) + chloride(out) + Na(+)(out) = dopamine(in) + chloride(in) + Na(+)(in). The catalysed reaction is (R)-noradrenaline(out) + chloride(out) + Na(+)(out) = (R)-noradrenaline(in) + chloride(in) + Na(+)(in). The enzyme catalyses dopamine(out) + chloride(out) + 2 Na(+)(out) = dopamine(in) + chloride(in) + 2 Na(+)(in). With respect to regulation, inhibited by GBR 12909 dihydrochloride, amphetamine and cocaine. Inhibited by zinc ions. Functionally, mediates sodium- and chloride-dependent transport of dopamine. Also mediates sodium- and chloride-dependent transport of norepinephrine (also known as noradrenaline). Regulator of light-dependent retinal hyaloid vessel regression, downstream of OPN5 signaling. The sequence is that of Sodium-dependent dopamine transporter (SLC6A3) from Bos taurus (Bovine).